Here is a 310-residue protein sequence, read N- to C-terminus: Ribosomal RNA small subunit methyltransferase H (310 aa).

S-adenosyl-L-methionine contacts are provided by residues 32-34 (AGH), D51, F78, D99, and Q106.

The protein belongs to the methyltransferase superfamily. RsmH family.

The protein resides in the cytoplasm. It carries out the reaction cytidine(1402) in 16S rRNA + S-adenosyl-L-methionine = N(4)-methylcytidine(1402) in 16S rRNA + S-adenosyl-L-homocysteine + H(+). Its function is as follows. Specifically methylates the N4 position of cytidine in position 1402 (C1402) of 16S rRNA. This Macrococcus caseolyticus (strain JCSC5402) (Macrococcoides caseolyticum) protein is Ribosomal RNA small subunit methyltransferase H.